The chain runs to 479 residues: Aspartyl/glutamyl-tRNA(Asn/Gln) amidotransferase subunit B (479 aa).

This sequence belongs to the GatB/GatE family. GatB subfamily. In terms of assembly, heterotrimer of A, B and C subunits.

It carries out the reaction L-glutamyl-tRNA(Gln) + L-glutamine + ATP + H2O = L-glutaminyl-tRNA(Gln) + L-glutamate + ADP + phosphate + H(+). It catalyses the reaction L-aspartyl-tRNA(Asn) + L-glutamine + ATP + H2O = L-asparaginyl-tRNA(Asn) + L-glutamate + ADP + phosphate + 2 H(+). In terms of biological role, allows the formation of correctly charged Asn-tRNA(Asn) or Gln-tRNA(Gln) through the transamidation of misacylated Asp-tRNA(Asn) or Glu-tRNA(Gln) in organisms which lack either or both of asparaginyl-tRNA or glutaminyl-tRNA synthetases. The reaction takes place in the presence of glutamine and ATP through an activated phospho-Asp-tRNA(Asn) or phospho-Glu-tRNA(Gln). The sequence is that of Aspartyl/glutamyl-tRNA(Asn/Gln) amidotransferase subunit B from Geobacter sulfurreducens (strain ATCC 51573 / DSM 12127 / PCA).